Reading from the N-terminus, the 385-residue chain is Effector protein hopAB3 (385 aa).

3 disordered regions span residues 1–61, 73–139, and 215–293; these read MVGI…AGRP, TREW…SPLY, and ADSQ…PRIN. Residues 1–333 form a host recognition region; sequence MVGISGRAGP…INMEDLRAAL (333 aa). Residues 217–234 show a composition bias toward low complexity; sequence SQQAARAPARTPPRSSVR. 2 stretches are compositionally biased toward polar residues: residues 245–256 and 265–283; these read ATESSSGSNQRS and MTSN…TSQR.

Belongs to the HopAB family. Interacts physically with plant cell Pto.

Its subcellular location is the secreted. In terms of biological role, effector protein involved in gene-for-gene resistance in tomato plants. It is recognized by the host Pto resistance protein and elicits Pto and Prf-dependent hypersensitive response (HR) and programmed cell death (PCD), resulting in host immunity. In susceptible plants, promotes virulence, in part, by enhancing the development of disease symptoms and bacterial growth. This chain is Effector protein hopAB3 (hopAB3), found in Pseudomonas syringae pv. maculicola.